A 60-amino-acid chain; its full sequence is Ferredoxin-1 (60 aa).

4Fe-4S ferredoxin-type domains lie at 2 to 27 and 28 to 60; these read LYITEECTYCGACEPECPVTAISAGD and DIYVIDANTCNECAGLDEQACVAVCPAECIVQG. Residues Cys-8, Cys-11, Cys-14, Cys-18, Cys-37, Cys-40, Cys-48, and Cys-52 each coordinate [4Fe-4S] cluster.

Requires [4Fe-4S] cluster as cofactor.

In terms of biological role, ferredoxins are iron-sulfur proteins that transfer electrons in a wide variety of metabolic reactions. The polypeptide is Ferredoxin-1 (Chlorobium limicola).